The primary structure comprises 79 residues: Centromere protein X (79 aa).

The residue at position 1 (Met-1) is an N-acetylmethionine.

This sequence belongs to the CENP-X/MHF2 family. As to quaternary structure, heterodimer with CENPX, sometimes called MHF; this interaction stabilizes both partners. MHF heterodimers can assemble to form tetrameric structures. MHF also coassemble with CENPT-CENPW heterodimers at centromeres to form the tetrameric CENP-T-W-S-X complex. Forms a discrete complex with FANCM and CENPX, called FANCM-MHF; this interaction, probably mediated by direct binding between CENPS and FANCM, leads to synergistic activation of double-stranded DNA binding and strongly stimulates FANCM-mediated DNA remodeling. Recruited by FANCM to the Fanconi anemia (FA) core complex, which consists of CENPS, CENPX, FANCA, FANCB, FANCC, FANCE, FANCF, FANCG, FANCL, FANCM, FAAP24 and FAAP100. The FA core complex associates with Bloom syndrome (BLM) complex, which consists of at least BLM, DNA topoisomerase 3-alpha (TOP3A), RMI1/BLAP75, RPA1/RPA70 and RPA2/RPA32. The super complex between FA and BLM is called BRAFT.

Its subcellular location is the nucleus. The protein localises to the chromosome. The protein resides in the centromere. It is found in the kinetochore. Its function is as follows. DNA-binding component of the Fanconi anemia (FA) core complex. Required for the normal activation of the FA pathway, leading to monoubiquitination of the FANCI-FANCD2 complex in response to DNA damage, cellular resistance to DNA cross-linking drugs, and prevention of chromosomal breakage. In complex with CENPS (MHF heterodimer), crucial cofactor for FANCM in both binding and ATP-dependent remodeling of DNA. Stabilizes FANCM. In complex with CENPS and FANCM (but not other FANC proteins), rapidly recruited to blocked forks and promotes gene conversion at blocked replication forks. In complex with CENPS, CENPT and CENPW (CENP-T-W-S-X heterotetramer), involved in the formation of a functional kinetochore outer plate, which is essential for kinetochore-microtubule attachment and faithful mitotic progression. As a component of MHF and CENP-T-W-S-X complexes, binds DNA and bends it to form a nucleosome-like structure. DNA-binding function is fulfilled in the presence of CENPS, with the following preference for DNA substates: Holliday junction &gt; double-stranded &gt; splay arm &gt; single-stranded. Does not bind DNA on its own. This chain is Centromere protein X (CENPX), found in Bos taurus (Bovine).